Reading from the N-terminus, the 217-residue chain is Small ribosomal subunit protein uS11m (217 aa).

The transit peptide at 1–59 (MLLQPVWKGCRWTQFVRPIRRWNSTGTNRGVPFSFKDISNQEDITNISYPSSSDSVLTK) directs the protein to the mitochondrion.

It belongs to the universal ribosomal protein uS11 family. Component of the mitochondrial small ribosomal subunit (mt-SSU). Mature yeast 74S mitochondrial ribosomes consist of a small (37S) and a large (54S) subunit. The 37S small subunit contains a 15S ribosomal RNA (15S mt-rRNA) and 34 different proteins. The 54S large subunit contains a 21S rRNA (21S mt-rRNA) and 46 different proteins.

The protein localises to the mitochondrion. Component of the mitochondrial ribosome (mitoribosome), a dedicated translation machinery responsible for the synthesis of mitochondrial genome-encoded proteins, including at least some of the essential transmembrane subunits of the mitochondrial respiratory chain. The mitoribosomes are attached to the mitochondrial inner membrane and translation products are cotranslationally integrated into the membrane. The sequence is that of Small ribosomal subunit protein uS11m (MRPS18) from Saccharomyces cerevisiae (strain ATCC 204508 / S288c) (Baker's yeast).